Consider the following 284-residue polypeptide: MARLLDGRSVAAQIRAEVAEGVSELKRRGVPVRLDVILAGEDPASVTYVSNKRRDCAEVGIESRLHAFPADVPQKELLALVERLNGDPEVSGFFIQLPLPGGVDPLPLLSAIDPSKDVDGLSPQSAGRLAVGLPSLLPCTPHGVIQLLRRSGVGLEGREAVVVGRSNLVGKPLALLLLRENATVTVCHSRTRDLAGVTRRAEVLVVAAGRRGMVGAEHVREGAVVVDVGIHRAEDGGLTGDVRQEEVAARAAALTPVPGGVGPMTRAMLLYNTLEAARLREERA.

NADP(+) is bound by residues 164–166 (GRS), serine 189, and isoleucine 230.

This sequence belongs to the tetrahydrofolate dehydrogenase/cyclohydrolase family. As to quaternary structure, homodimer.

The catalysed reaction is (6R)-5,10-methylene-5,6,7,8-tetrahydrofolate + NADP(+) = (6R)-5,10-methenyltetrahydrofolate + NADPH. It catalyses the reaction (6R)-5,10-methenyltetrahydrofolate + H2O = (6R)-10-formyltetrahydrofolate + H(+). Its pathway is one-carbon metabolism; tetrahydrofolate interconversion. In terms of biological role, catalyzes the oxidation of 5,10-methylenetetrahydrofolate to 5,10-methenyltetrahydrofolate and then the hydrolysis of 5,10-methenyltetrahydrofolate to 10-formyltetrahydrofolate. In Rubrobacter xylanophilus (strain DSM 9941 / JCM 11954 / NBRC 16129 / PRD-1), this protein is Bifunctional protein FolD 1.